A 506-amino-acid chain; its full sequence is Tubby protein homolog (506 aa).

The interval 36 to 244 (QKQKKKRQEP…PSPTAPEQPV (209 aa)) is disordered. Composition is skewed to low complexity over residues 70-87 (LVES…QVQE) and 101-116 (PTAP…AATA). Residues 196-206 (FDEDEEDEEEN) are compositionally biased toward acidic residues. Low complexity-rich tracts occupy residues 207 to 221 (SSSS…RPSS) and 230 to 243 (EAAS…PEQP).

The protein belongs to the TUB family. As to quaternary structure, interacts with GNAQ. Interacts with TULP1.

It localises to the cytoplasm. It is found in the nucleus. The protein resides in the secreted. The protein localises to the cell membrane. Functionally, functions in signal transduction from heterotrimeric G protein-coupled receptors. Binds to membranes containing phosphatidylinositol 4,5-bisphosphate. Can bind DNA (in vitro). May contribute to the regulation of transcription in the nucleus. Could be involved in the hypothalamic regulation of body weight. Contribute to stimulation of phagocytosis of apoptotic retinal pigment epithelium (RPE) cells and macrophages. The chain is Tubby protein homolog (TUB) from Homo sapiens (Human).